Here is a 306-residue protein sequence, read N- to C-terminus: Replication termination factor 2 (306 aa).

The disordered stretch occupies residues 192–306 (RAKLEKKTKK…HWVTHTSYCF (115 aa)). Over residues 226 to 240 (GKSEEADPDPREKKS) the composition is skewed to basic and acidic residues. Position 287 is a phosphoserine (Ser-287).

This sequence belongs to the rtf2 family. In terms of assembly, interacts with DDI2; probably also interacts with DDI1. Post-translationally, undergoes proteasomal degradation, via DDI1 and DDI2. Removal from stalled replisomes and degradation are required for genome stability.

The protein resides in the chromosome. Its function is as follows. Replication termination factor which is a component of the elongating replisome. Required for ATR pathway signaling upon DNA damage and has a positive activity during DNA replication. Might function to facilitate fork pausing at replication fork barriers like the rDNA. May be globally required to stimulate ATR signaling after the fork stalls or encounters a lesion. Interacts with nascent DNA. The polypeptide is Replication termination factor 2 (Rattus norvegicus (Rat)).